The chain runs to 703 residues: Meiotic coiled-coil protein 2 (703 aa).

2 stretches are compositionally biased toward polar residues: residues 1–19 (MQSI…SISE) and 245–258 (TNVR…STPL). Disordered stretches follow at residues 1–29 (MQSI…SELN), 245–265 (TNVR…DVDL), and 284–309 (ASTN…RSSS). A PUM-HD domain is found at 331 to 686 (NPSVIPESTS…KVAYLVEKWN (356 aa)). 8 Pumilio repeats span residues 361-396 (NVII…NIVD), 397-432 (SIIS…QMGS), 433-468 (AMLG…AMMD), 469-504 (ELFL…NVMN), 509-544 (ALRG…ECIE), 545-580 (EIIF…RVID), 581-616 (ALLN…LYLK), and 625-660 (RTRQ…LVIT).

The chain is Meiotic coiled-coil protein 2 (mcp2) from Schizosaccharomyces pombe (strain 972 / ATCC 24843) (Fission yeast).